The primary structure comprises 74 residues: Psi-conotoxin PrIIIE (74 aa).

The N-terminal stretch at 1–19 is a signal peptide; sequence MSKLGVLLTICLLLFPITA. Positions 20–50 are excised as a propeptide; sequence LPVDGDQPADRPVERMQDNISSEQHPFFEKR. 3 disulfides stabilise this stretch: cysteine 54-cysteine 66, cysteine 55-cysteine 71, and cysteine 61-cysteine 72. Cysteine amide is present on cysteine 72.

It belongs to the conotoxin M superfamily. As to expression, expressed by the venom duct.

The protein resides in the secreted. Its function is as follows. Psi-conotoxins act on postsynaptic membranes, and act as non-competitive antagonist of nicotinic acetylcholine receptors (nAChR). Reversibly inhibits both adult- and fetal-types nAChR. The inhibition potency against the adult- (alpha-1/beta-1/epsilon/delta) is higher than against the fetal-type (alpha-1/beta-1/gamma/delta). Induces flaccid paralysis in goldfish, but does not induce any remarkable behavior in mice and does not block action potential in directly stimulated frog muscle preparations. This Conus parius (Cone snail) protein is Psi-conotoxin PrIIIE.